Consider the following 213-residue polypeptide: 3,4-dihydroxy-2-butanone 4-phosphate synthase (213 aa).

D-ribulose 5-phosphate contacts are provided by residues 37–38 (RE), Asp42, 150–154 (RSGHT), and Glu174. Glu38 is a Mg(2+) binding site. His153 provides a ligand contact to Mg(2+).

It belongs to the DHBP synthase family. In terms of assembly, homodimer. Requires Mg(2+) as cofactor. Mn(2+) serves as cofactor.

The enzyme catalyses D-ribulose 5-phosphate = (2S)-2-hydroxy-3-oxobutyl phosphate + formate + H(+). The protein operates within cofactor biosynthesis; riboflavin biosynthesis; 2-hydroxy-3-oxobutyl phosphate from D-ribulose 5-phosphate: step 1/1. Functionally, catalyzes the conversion of D-ribulose 5-phosphate to formate and 3,4-dihydroxy-2-butanone 4-phosphate. The chain is 3,4-dihydroxy-2-butanone 4-phosphate synthase from Blochmanniella floridana.